Here is a 484-residue protein sequence, read N- to C-terminus: Sperm motility kinase 2B (484 aa).

The region spanning 8-256 (YVMLETIGHG…VAEVMVHPWV (249 aa)) is the Protein kinase domain. Residues 14–22 (IGHGGCSKV) and lysine 37 contribute to the ATP site. Aspartate 127 acts as the Proton acceptor in catalysis. Positions 272–314 (PLKPNPAIVKAMGYIGFQAQDIEDSLRQRKFNETMASYCLLKK) constitute a UBA domain. Polar residues-rich tracts occupy residues 356-373 (PTSL…CGRS) and 422-434 (SSDD…TSAS). Disordered regions lie at residues 356–400 (PTSL…TMDH) and 422–450 (SSDD…RGIK).

It belongs to the protein kinase superfamily. CAMK Ser/Thr protein kinase family. Smok subfamily. As to expression, testis-specific. Expressed in the testis from 22 days postpartum (22 dpp).

It carries out the reaction L-seryl-[protein] + ATP = O-phospho-L-seryl-[protein] + ADP + H(+). The enzyme catalyses L-threonyl-[protein] + ATP = O-phospho-L-threonyl-[protein] + ADP + H(+). Functionally, may play a role in sperm motility, especially in the regulation of flagellar function. The protein is Sperm motility kinase 2B of Mus musculus (Mouse).